Here is a 227-residue protein sequence, read N- to C-terminus: Ribosomal RNA large subunit methyltransferase E (227 aa).

S-adenosyl-L-methionine-binding residues include glycine 78, tryptophan 80, aspartate 103, aspartate 119, and aspartate 143. The active-site Proton acceptor is lysine 183.

It belongs to the class I-like SAM-binding methyltransferase superfamily. RNA methyltransferase RlmE family.

The protein localises to the cytoplasm. The catalysed reaction is uridine(2552) in 23S rRNA + S-adenosyl-L-methionine = 2'-O-methyluridine(2552) in 23S rRNA + S-adenosyl-L-homocysteine + H(+). In terms of biological role, specifically methylates the uridine in position 2552 of 23S rRNA at the 2'-O position of the ribose in the fully assembled 50S ribosomal subunit. The protein is Ribosomal RNA large subunit methyltransferase E of Rickettsia akari (strain Hartford).